A 138-amino-acid polypeptide reads, in one-letter code: Phosphoribosyl-AMP cyclohydrolase (138 aa).

Asp-84 contacts Mg(2+). Residue Cys-85 participates in Zn(2+) binding. The Mg(2+) site is built by Asp-86 and Asp-88. Zn(2+)-binding residues include Cys-102 and Cys-109.

It belongs to the PRA-CH family. In terms of assembly, homodimer. Mg(2+) serves as cofactor. Requires Zn(2+) as cofactor.

Its subcellular location is the cytoplasm. It carries out the reaction 1-(5-phospho-beta-D-ribosyl)-5'-AMP + H2O = 1-(5-phospho-beta-D-ribosyl)-5-[(5-phospho-beta-D-ribosylamino)methylideneamino]imidazole-4-carboxamide. It functions in the pathway amino-acid biosynthesis; L-histidine biosynthesis; L-histidine from 5-phospho-alpha-D-ribose 1-diphosphate: step 3/9. Catalyzes the hydrolysis of the adenine ring of phosphoribosyl-AMP. The polypeptide is Phosphoribosyl-AMP cyclohydrolase (Burkholderia cenocepacia (strain ATCC BAA-245 / DSM 16553 / LMG 16656 / NCTC 13227 / J2315 / CF5610) (Burkholderia cepacia (strain J2315))).